Reading from the N-terminus, the 426-residue chain is Cytochrome c biogenesis protein CcsB (426 aa).

The next 3 helical transmembrane spans lie at 14-34, 72-92, and 162-182; these read LKIA…GTLI, SFWF…CSFR, and LGPI…TYGS.

The protein belongs to the Ccs1/CcsB family. May interact with CcsA.

It localises to the cellular thylakoid membrane. Functionally, required during biogenesis of c-type cytochromes (cytochrome c6 and cytochrome f) at the step of heme attachment. The chain is Cytochrome c biogenesis protein CcsB from Prochlorococcus marinus (strain NATL2A).